Consider the following 442-residue polypeptide: Glutamyl-tRNA reductase (442 aa).

Residues 49 to 52 (TCNR), Ser-109, 114 to 116 (ESQ), and Gln-120 each bind substrate. The Nucleophile role is filled by Cys-50. Position 189–194 (189–194 (GAGAMS)) interacts with NADP(+).

Belongs to the glutamyl-tRNA reductase family. In terms of assembly, homodimer.

It catalyses the reaction (S)-4-amino-5-oxopentanoate + tRNA(Glu) + NADP(+) = L-glutamyl-tRNA(Glu) + NADPH + H(+). It participates in porphyrin-containing compound metabolism; protoporphyrin-IX biosynthesis; 5-aminolevulinate from L-glutamyl-tRNA(Glu): step 1/2. Functionally, catalyzes the NADPH-dependent reduction of glutamyl-tRNA(Glu) to glutamate 1-semialdehyde (GSA). The chain is Glutamyl-tRNA reductase from Kineococcus radiotolerans (strain ATCC BAA-149 / DSM 14245 / SRS30216).